The sequence spans 318 residues: Probable serine/threonine-protein kinase MRK1 homolog (318 aa).

The 274-residue stretch at 40–313 folds into the Protein kinase domain; it reads YRYVEMIGRG…ASELLRKQFF (274 aa). ATP is bound by residues 46–54 and Lys-68; that span reads IGRGSFGVV. Asp-159 (proton acceptor) is an active-site residue.

This sequence belongs to the protein kinase superfamily. CMGC Ser/Thr protein kinase family. GSK-3 subfamily.

The protein resides in the cytoplasm. It localises to the nucleus. The enzyme catalyses L-seryl-[protein] + ATP = O-phospho-L-seryl-[protein] + ADP + H(+). The catalysed reaction is L-threonyl-[protein] + ATP = O-phospho-L-threonyl-[protein] + ADP + H(+). Functionally, may play a role in the initiation and completion of mitosis. This is Probable serine/threonine-protein kinase MRK1 homolog (MRK1) from Encephalitozoon cuniculi (strain GB-M1) (Microsporidian parasite).